The primary structure comprises 419 residues: Dual specificity protein phosphatase 7 (419 aa).

Residues 1–41 (MKNQLRGPPVRAHMSTSGAAAAGGTRAGSEPGAGSGSSAGI) form a disordered region. Residues 15–30 (STSGAAAAGGTRAGSE) show a composition bias toward low complexity. Residues 31 to 41 (PGAGSGSSAGI) show a composition bias toward gly residues. The 120-residue stretch at 68 to 187 (GGASLLLLDC…FQTEYSEHCE (120 aa)) folds into the Rhodanese domain. The disordered stretch occupies residues 216–240 (CSDGESDRELPSSATESDGSPVPSS). The segment covering 227-240 (SSATESDGSPVPSS) has biased composition (polar residues). A Tyrosine-protein phosphatase domain is found at 244-387 (FPVQILPYLY…LLDFERTLGL (144 aa)). Cysteine 331 acts as the Phosphocysteine intermediate in catalysis. Residue 331-337 (CLAGISR) coordinates substrate.

This sequence belongs to the protein-tyrosine phosphatase family. Non-receptor class dual specificity subfamily. In terms of assembly, interacts with MAPK1/ERK2; the interaction enhances DUSP7 phosphatase activity.

It localises to the cytoplasm. It catalyses the reaction O-phospho-L-tyrosyl-[protein] + H2O = L-tyrosyl-[protein] + phosphate. It carries out the reaction O-phospho-L-seryl-[protein] + H2O = L-seryl-[protein] + phosphate. The enzyme catalyses O-phospho-L-threonyl-[protein] + H2O = L-threonyl-[protein] + phosphate. Its activity is regulated as follows. Strongly inhibited by sodium orthovanadate. Its function is as follows. Dual specificity protein phosphatase. Shows high activity towards MAPK1/ERK2. Also has lower activity towards MAPK14 and MAPK8. In arrested oocytes, plays a role in meiotic resumption. Promotes nuclear envelope breakdown and activation of the CDK1/Cyclin-B complex in oocytes, probably by dephosphorylating and inactivating the conventional protein kinase C (cPKC) isozyme PRKCB. May also inactivate PRKCA and/or PRKCG. Also important in oocytes for normal chromosome alignment on the metaphase plate and progression to anaphase, where it might regulate activity of the spindle-assembly checkpoint (SAC) complex. The chain is Dual specificity protein phosphatase 7 from Rattus norvegicus (Rat).